We begin with the raw amino-acid sequence, 1693 residues long: uncharacterized protein (1693 aa).

WD repeat units lie at residues 1008–1042 (HHEG…YLWS), 1053–1083 (GHQE…KLWQ), 1094–1124 (GHED…RIWN), 1135–1165 (GHAD…RLWD), 1176–1206 (GHTS…RLWD), 1217–1247 (GHQN…RVWS), 1258–1288 (GHDH…RLWT), 1299–1329 (GHQK…RQWD), 1340–1370 (GHSH…RLWT), 1381–1411 (DHQG…QLWN), 1422–1452 (GHQD…RVWN), 1463–1493 (HYEK…GIWE), 1504–1534 (GHEG…RIWD), 1545–1575 (GHQS…RLWD), 1586–1616 (GHQG…RLWD), and 1627–1657 (GHGN…KLWP).

This is an uncharacterized protein from Synechocystis sp. (strain ATCC 27184 / PCC 6803 / Kazusa).